Here is a 397-residue protein sequence, read N- to C-terminus: Purine ribonucleoside efflux pump NepI (397 aa).

Over 1 to 21 the chain is Cytoplasmic; it reads MNENIAEKFRADGVARPNWSA. A helical transmembrane segment spans residues 22–42; sequence VFAVAFCVACLITVEFLPVSL. Topologically, residues 43–54 are periplasmic; sequence LTPMAQDLGISE. The chain crosses the membrane as a helical span at residues 55 to 75; it reads GVAGQSVTVTAFVAMFSSLFI. At 76 to 85 the chain is on the cytoplasmic side; it reads TQIIQATDRR. The helical transmembrane segment at 86 to 106 threads the bilayer; sequence YIVILFAVLLTASCLMVSFAN. Residue S107 is a topological domain, periplasmic. The chain crosses the membrane as a helical span at residues 108–128; the sequence is FTLLLLGRACLGLALGGFWAM. At 129-147 the chain is on the cytoplasmic side; the sequence is SASLTMRLVPARTVPKALS. A helical transmembrane segment spans residues 148–168; that stretch reads VIFGAVSIALVIAAPLGSFLG. The Periplasmic segment spans residues 169 to 175; sequence GIIGWRN. A helical membrane pass occupies residues 176–196; the sequence is VFNAAAVMGVLCVIWVVKSLP. Residues 197–215 are Cytoplasmic-facing; that stretch reads SLPGEPSHQKQNMFSLLQR. A helical membrane pass occupies residues 216–236; sequence PGVMAGMIAIFMSFAGQFAFF. Residues 237-255 lie on the Periplasmic side of the membrane; the sequence is TYIRPVYMNLAGFDVDGLT. The chain crosses the membrane as a helical span at residues 256 to 276; the sequence is LVLLSFGIASFVGTSFSSYVL. The Cytoplasmic portion of the chain corresponds to 277–281; sequence KRSVK. Residues 282–302 traverse the membrane as a helical segment; sequence LALAGAPLLLALSALTLIVWG. The Periplasmic segment spans residues 303–305; that stretch reads SDK. Residues 306-326 form a helical membrane-spanning segment; it reads TVAAAIAIIWGLAFALVPVGW. Over 327–343 the chain is Cytoplasmic; sequence STWITRSLADQAEKAGS. Residues 344–364 traverse the membrane as a helical segment; it reads IQVAVIQLANTCGAAVGGYAL. Over 365-366 the chain is Periplasmic; that stretch reads DN. Residues 367-387 traverse the membrane as a helical segment; the sequence is FGLLSPLALSGGLMLLTALVV. Residues 388–397 are Cytoplasmic-facing; the sequence is AAKVRITPMS.

It belongs to the major facilitator superfamily. DHA1 family. NepI (TC 2.A.1.2.26) subfamily.

It localises to the cell inner membrane. It carries out the reaction inosine(in) + H(+)(out) = inosine(out) + H(+)(in). It catalyses the reaction guanosine(in) + H(+)(out) = guanosine(out) + H(+)(in). In terms of biological role, involved in the efflux of purine ribonucleosides, such as inosine and guanosine. In Salmonella choleraesuis (strain SC-B67), this protein is Purine ribonucleoside efflux pump NepI.